The primary structure comprises 340 residues: S-adenosylmethionine:tRNA ribosyltransferase-isomerase (340 aa).

Belongs to the QueA family. In terms of assembly, monomer.

It is found in the cytoplasm. It catalyses the reaction 7-aminomethyl-7-carbaguanosine(34) in tRNA + S-adenosyl-L-methionine = epoxyqueuosine(34) in tRNA + adenine + L-methionine + 2 H(+). It participates in tRNA modification; tRNA-queuosine biosynthesis. Its function is as follows. Transfers and isomerizes the ribose moiety from AdoMet to the 7-aminomethyl group of 7-deazaguanine (preQ1-tRNA) to give epoxyqueuosine (oQ-tRNA). In Aliarcobacter butzleri (strain RM4018) (Arcobacter butzleri), this protein is S-adenosylmethionine:tRNA ribosyltransferase-isomerase.